Here is a 238-residue protein sequence, read N- to C-terminus: Arginine ABC transporter permease protein ArtQ (238 aa).

Residues Met1 to Thr14 lie on the Periplasmic side of the membrane. The region spanning Ala11–Leu223 is the ABC transmembrane type-1 domain. A helical membrane pass occupies residues Val15–Trp35. Topologically, residues Glu36–Ser48 are cytoplasmic. A helical membrane pass occupies residues Ala49–Gly69. Over Ser70–Asn98 the chain is Periplasmic. Residues Phe99–Ala119 form a helical membrane-spanning segment. The Cytoplasmic segment spans residues Ser120–Gln168. Residues Trp169–Leu189 form a helical membrane-spanning segment. The Periplasmic segment spans residues Gln190–Pro201. A helical membrane pass occupies residues Phe202–Ile222. At Leu223–Ser238 the chain is on the cytoplasmic side.

It belongs to the binding-protein-dependent transport system permease family. HisMQ subfamily. The complex is composed of two ATP-binding proteins (ArtP), two transmembrane proteins (ArtM and ArtQ) and two solute-binding proteins (ArtJ and ArtI).

It localises to the cell inner membrane. In terms of biological role, part of the ABC transporter complex ArtPIQMJ involved in arginine transport. Probably responsible for the translocation of the substrate across the membrane. This chain is Arginine ABC transporter permease protein ArtQ (artQ), found in Escherichia coli O6:H1 (strain CFT073 / ATCC 700928 / UPEC).